A 110-amino-acid polypeptide reads, in one-letter code: Cell division protein FtsB (110 aa).

Over M1 to L3 the chain is Cytoplasmic. Residues I4–L21 form a helical membrane-spanning segment. The Periplasmic segment spans residues G22–R110. A coiled-coil region spans residues D31–T64.

Belongs to the FtsB family. In terms of assembly, part of a complex composed of FtsB, FtsL and FtsQ.

The protein resides in the cell inner membrane. Its function is as follows. Essential cell division protein. May link together the upstream cell division proteins, which are predominantly cytoplasmic, with the downstream cell division proteins, which are predominantly periplasmic. The sequence is that of Cell division protein FtsB from Herminiimonas arsenicoxydans.